Consider the following 283-residue polypeptide: Elongation factor Ts (283 aa).

Positions 80-83 (TDFV) are involved in Mg(2+) ion dislocation from EF-Tu.

Belongs to the EF-Ts family.

It localises to the cytoplasm. Functionally, associates with the EF-Tu.GDP complex and induces the exchange of GDP to GTP. It remains bound to the aminoacyl-tRNA.EF-Tu.GTP complex up to the GTP hydrolysis stage on the ribosome. This is Elongation factor Ts from Salmonella paratyphi A (strain ATCC 9150 / SARB42).